Here is a 724-residue protein sequence, read N- to C-terminus: Solute carrier organic anion transporter family member 4C1 (724 aa).

Residues 1-105 (MKSAKGIENL…QCLQRCNTPG (105 aa)) are Cytoplasmic-facing. A phosphoserine mark is found at S15, S16, S24, S26, and S28. Residues 30-71 (IEVSALSSDPQRENSQPQELQKPQEPQKSPEPSLPSAPPNVS) form a disordered region. The segment covering 44–60 (SQPQELQKPQEPQKSPE) has biased composition (low complexity). Residues 106–126 (GFLLHYCLLAVTQGIVVNGLV) form a helical membrane-spanning segment. At 127–145 (NISISTVEKRYEMKSSLTG) the chain is on the extracellular side. The helical transmembrane segment at 146–166 (LISSSYDISFCLLSLFVSFFG) threads the bilayer. The Cytoplasmic portion of the chain corresponds to 167–172 (ERGHKP). A helical membrane pass occupies residues 173–197 (RWLAFAAFMIGLGALVFSLPQFFSG). Over 198–223 (EYKLGSLFEDTCVTTRNSTSCTSSTS) the chain is Extracellular. A helical transmembrane segment spans residues 224–254 (SLSNYLYVFILGQLLLGAGGTPLYTLGTAFL). The Cytoplasmic portion of the chain corresponds to 255 to 274 (DDSVPTHKSSLYIGTGYAMS). A helical membrane pass occupies residues 275 to 295 (ILGPAIGYVLGGQLLTIYIDV). At 296–311 (AMGESTDVTEDDPRWL) the chain is on the extracellular side. Residues 312–336 (GAWWIGFLLSWIFAWSLIIPFSCFP) traverse the membrane as a helical segment. At 337–377 (KHLPGTAEIQAGKTSQAHQSNSNADVKFGKSIKDFPAALKN) the chain is on the cytoplasmic side. A helical membrane pass occupies residues 378–399 (LMKNAVFMCLVLSTSSEALITT). The Extracellular portion of the chain corresponds to 400 to 419 (GFATFLPKFIENQFGLTSSF). The helical transmembrane segment at 420 to 443 (AATLGGAVLIPGAALGQILGGFLV) threads the bilayer. The Cytoplasmic portion of the chain corresponds to 444–447 (SKFR). The helical transmembrane segment at 448-471 (MTCKNTMKFALFTSGVALTLSFVF) threads the bilayer. The Extracellular segment spans residues 472-580 (MYAKCENEPF…ETHCAKLPIF (109 aa)). Residues 495–549 (GNLIAPCNANCNCSRSYYYPVCGDGVQYFSPCFAGCSNPVAHRKPKVYYNCSCIE) enclose the Kazal-like domain. 3 disulfide bridges follow: C501-C530, C507-C526, and C516-C547. A helical transmembrane segment spans residues 581–603 (LCIFFIVIIFTFMAGTPITVSIL). Topologically, residues 604–612 (RCVNHRQRS) are cytoplasmic. Residues 613-638 (LALGIQFMVLRLLGTIPGPIIFGFTI) form a helical membrane-spanning segment. Topologically, residues 639–672 (DSTCILWDINDCGIKGACWIYDNIKMAHMLVAIS) are extracellular. The helical transmembrane segment at 673-690 (VTCKVITMFFNGFAIFLY) threads the bilayer. At 691–724 (KPPPSATDVSFHKENAVVTNVLAEQDLNKIVKEG) the chain is on the cytoplasmic side.

Belongs to the organo anion transporter (TC 2.A.60) family. In terms of tissue distribution, predominantly expressed in kidney but also weakly expressed in both fetal liver and kidney.

Its subcellular location is the basolateral cell membrane. The enzyme catalyses estrone 3-sulfate(out) = estrone 3-sulfate(in). The catalysed reaction is L-thyroxine(out) = L-thyroxine(in). It carries out the reaction 3,3',5-triiodo-L-thyronine(out) = 3,3',5-triiodo-L-thyronine(in). It catalyses the reaction chenodeoxycholate(out) = chenodeoxycholate(in). The enzyme catalyses glycocholate(out) = glycocholate(in). The catalysed reaction is L-homoarginine(in) = L-homoarginine(out). It carries out the reaction L-arginine(in) = L-arginine(out). It catalyses the reaction N(omega),N(omega)-dimethyl-L-arginine(out) = N(omega),N(omega)-dimethyl-L-arginine(in). Its function is as follows. Mediates the transport of organic anions such as steroids (estrone 3-sulfate, chenodeoxycholate, glycocholate) and thyroid hormones (3,3',5-triiodo-L-thyronine (T3), L-thyroxine (T4)), in the kidney. Capable of transporting cAMP and pharmacological substances such as digoxin, ouabain and methotrexate. Transport is independent of sodium, chloride ion, and ATP. Transport activity is stimulated by an acidic extracellular environment due to increased substrate affinity to the transporter. The driving force for this transport activity is currently not known. The role of hydrogencarbonate (HCO3(-), bicarbonate) as the probable counteranion that exchanges for organic anions is still not well defined. Functions as an uptake transporter at the apical membrane, suggesting a role in renal reabsorption. Involved in the renal secretion of the uremic toxin ADMA (N(omega),N(omega)-dimethyl-L-arginine or asymmetrical dimethylarginine), which is associated to cardiovascular events and mortality, and the structurally related amino acids L-arginine and L-homoarginine (a cardioprotective biomarker). Can act bidirectionally, suggesting a dual protective role of this transport protein; exporting L-homoarginine after being synthesized in proximal tubule cells, and mediating uptake of ADMA from the blood into proximal tubule cells where it is degraded by the enzyme dimethylarginine dimethylaminohydrolase 1 (DDAH1). May be involved in sperm maturation by enabling directed movement of organic anions and compounds within or between cells. This ion-transporting process is important to maintain the strict epididymal homeostasis necessary for sperm maturation. May have a role in secretory functions since seminal vesicle epithelial cells are assumed to secrete proteins involved in decapacitation by modifying surface proteins to facilitate the acquisition of the ability to fertilize the egg. The polypeptide is Solute carrier organic anion transporter family member 4C1 (Homo sapiens (Human)).